Here is a 314-residue protein sequence, read N- to C-terminus: FHA domain-containing protein DDL (314 aa).

Over residues 1–10 the composition is skewed to low complexity; sequence MAPSSRSPSP. The disordered stretch occupies residues 1–146; sequence MAPSSRSPSP…NVEEDSVARM (146 aa). Basic and acidic residues predominate over residues 18-127; it reads ARGEKEIGRS…AIASRHDEGS (110 aa). At Ser-133 the chain carries Phosphoserine. The FHA domain maps to 219 to 282; the sequence is YLFGRERRIA…NKTYINESPI (64 aa).

As to quaternary structure, interacts with DCL1 (via N-terminus). Expressed in roots, lateral roots, vascular strands of roots and leaves, vegetative meristems, pollen and developing seeds.

Its subcellular location is the nucleus. Functionally, involved in the microRNA (miRNA) and short interfering RNA (siRNA) biogenesis. May facilitate DCL1 to access or recognize primary miRNAs. Binds RNA non-specifically. The protein is FHA domain-containing protein DDL (DDL) of Arabidopsis thaliana (Mouse-ear cress).